A 122-amino-acid chain; its full sequence is uncharacterized protein (122 aa).

The N-terminal stretch at 1–33 (MASTVAGLSMSAESLRLPLLIGVSSGMLSVSDA) is a signal peptide.

This is an uncharacterized protein from Saccharomyces cerevisiae (strain ATCC 204508 / S288c) (Baker's yeast).